Here is a 283-residue protein sequence, read N- to C-terminus: Pyridoxine/pyridoxal/pyridoxamine kinase (283 aa).

Residues Ser23 and His59 each contribute to the substrate site. Asp125 lines the ATP pocket. Tyr136 is a Mg(2+) binding site. Residues Thr157, Glu162, Thr195, 222–225 (HAHV), and Thr232 each bind ATP. Glu162 contributes to the Mg(2+) binding site. Asp234 is a substrate binding site.

It belongs to the pyridoxine kinase family. PdxK subfamily. In terms of assembly, homodimer. It depends on Mg(2+) as a cofactor.

It carries out the reaction pyridoxal + ATP = pyridoxal 5'-phosphate + ADP + H(+). The enzyme catalyses pyridoxine + ATP = pyridoxine 5'-phosphate + ADP + H(+). It catalyses the reaction pyridoxamine + ATP = pyridoxamine 5'-phosphate + ADP + H(+). The protein operates within cofactor metabolism; pyridoxal 5'-phosphate salvage; pyridoxal 5'-phosphate from pyridoxal: step 1/1. Its pathway is cofactor metabolism; pyridoxal 5'-phosphate salvage; pyridoxine 5'-phosphate from pyridoxine: step 1/1. It functions in the pathway cofactor metabolism; pyridoxal 5'-phosphate salvage; pyridoxamine 5'-phosphate from pyridoxamine: step 1/1. B6-vitamer kinase involved in the salvage pathway of pyridoxal 5'-phosphate (PLP). Catalyzes the phosphorylation of pyridoxine (PN), pyridoxal (PL), and pyridoxamine (PM), forming their respective 5'-phosphorylated esters, i.e. PNP, PLP and PMP. The chain is Pyridoxine/pyridoxal/pyridoxamine kinase from Bordetella bronchiseptica (strain ATCC BAA-588 / NCTC 13252 / RB50) (Alcaligenes bronchisepticus).